The sequence spans 232 residues: Ornithine carbamoyltransferase (232 aa).

Carbamoyl phosphate is bound by residues Gln15, Arg39, and 66 to 69 (HPTQ). Residues Asn99, Asp163, and 167-168 (SM) contribute to the L-ornithine site. Carbamoyl phosphate-binding positions include 204–207 (HCLP) and Thr232.

It belongs to the aspartate/ornithine carbamoyltransferase superfamily. OTCase family.

It localises to the cytoplasm. It catalyses the reaction carbamoyl phosphate + L-ornithine = L-citrulline + phosphate + H(+). It participates in amino-acid biosynthesis; L-arginine biosynthesis; L-arginine from L-ornithine and carbamoyl phosphate: step 1/3. In terms of biological role, reversibly catalyzes the transfer of the carbamoyl group from carbamoyl phosphate (CP) to the N(epsilon) atom of ornithine (ORN) to produce L-citrulline. The protein is Ornithine carbamoyltransferase (argF) of Neisseria flava.